The primary structure comprises 114 residues: UPF0145 protein SSO1976 (114 aa).

Belongs to the UPF0145 family.

The protein is UPF0145 protein SSO1976 of Saccharolobus solfataricus (strain ATCC 35092 / DSM 1617 / JCM 11322 / P2) (Sulfolobus solfataricus).